The following is a 179-amino-acid chain: Large ribosomal subunit protein uL5 (179 aa).

The protein belongs to the universal ribosomal protein uL5 family. Part of the 50S ribosomal subunit; part of the 5S rRNA/L5/L18/L25 subcomplex. Contacts the 5S rRNA and the P site tRNA. Forms a bridge to the 30S subunit in the 70S ribosome.

Functionally, this is one of the proteins that bind and probably mediate the attachment of the 5S RNA into the large ribosomal subunit, where it forms part of the central protuberance. In the 70S ribosome it contacts protein S13 of the 30S subunit (bridge B1b), connecting the 2 subunits; this bridge is implicated in subunit movement. Contacts the P site tRNA; the 5S rRNA and some of its associated proteins might help stabilize positioning of ribosome-bound tRNAs. This is Large ribosomal subunit protein uL5 from Anaplasma marginale (strain Florida).